The chain runs to 151 residues: Ribosomal RNA large subunit methyltransferase H (151 aa).

Residues leucine 73, glycine 100, and 119–124 contribute to the S-adenosyl-L-methionine site; that span reads LSKMTM.

The protein belongs to the RNA methyltransferase RlmH family. In terms of assembly, homodimer.

The protein resides in the cytoplasm. The enzyme catalyses pseudouridine(1915) in 23S rRNA + S-adenosyl-L-methionine = N(3)-methylpseudouridine(1915) in 23S rRNA + S-adenosyl-L-homocysteine + H(+). Its function is as follows. Specifically methylates the pseudouridine at position 1915 (m3Psi1915) in 23S rRNA. The protein is Ribosomal RNA large subunit methyltransferase H of Campylobacter concisus (strain 13826).